The sequence spans 233 residues: Ras-related protein RabV (233 aa).

GTP is bound at residue 15–22; sequence GEKEVGKS. The Effector region motif lies at 37–45; that stretch reads YIPTIGIDF. GTP is bound by residues 63 to 67 and 122 to 125; these read DYVSH and TKSD. A disordered region spans residues 143-182; the sequence is QNNNNNNNNNNNNNNNNNNNNNNNNNNNNNSNNNNNNNLQ. Low complexity predominate over residues 144-180; the sequence is NNNNNNNNNNNNNNNNNNNNNNNNNNNNNSNNNNNNN.

It belongs to the small GTPase superfamily. Rab family.

This Dictyostelium discoideum (Social amoeba) protein is Ras-related protein RabV (rabV).